The following is a 1161-amino-acid chain: Lateral signaling target protein 2 homolog (1161 aa).

Disordered stretches follow at residues 417-510 (ATGS…EVDD), 583-831 (AAGS…PTQS), 890-918 (MNSS…HNHP), 935-978 (DQQN…SVES), 992-1014 (SSPV…TGQE), and 1029-1095 (GKAS…EPPR). The segment covering 419 to 429 (GSSGFGSGRGG) has biased composition (gly residues). A compositionally biased stretch (basic residues) spans 438-453 (PKQRHNQAHLRQRGAP). Over residues 468–487 (GDDREPVVEEDNNNHLRKEI) the composition is skewed to basic and acidic residues. Residues 488–510 (EEEDVDDDMEEEEEDEEEDEVDD) show a composition bias toward acidic residues. Low complexity predominate over residues 583-601 (AAGSGGQQQQQQQQQLIDS). Acidic residues predominate over residues 669-704 (SDYEEADVDDEPDDVDADDDDEEEDDVVGEVEEQND). A compositionally biased stretch (basic residues) spans 728 to 742 (KAARNHRKSSHHRPR). The segment covering 743 to 757 (PSTSSSSSSAAYRNK) has biased composition (low complexity). The span at 758–773 (SQSHQHHHHHHHHHHH) shows a compositional bias: basic residues. 2 stretches are compositionally biased toward low complexity: residues 781–800 (GTSS…SNGS) and 807–831 (MQQQ…PTQS). Acidic residues predominate over residues 896-910 (EPDEPPEPSGSEEES). Polar residues-rich tracts occupy residues 935–948 (DQQN…QSIY) and 956–967 (EQDSVFGSSGDS). The span at 996-1010 (GAGGAGGGGMVGGSR) shows a compositional bias: gly residues. The segment covering 1054 to 1065 (SRSSPSSPVNSN) has biased composition (low complexity). Over residues 1081-1094 (TAHEQQRRMPEEPP) the composition is skewed to basic and acidic residues. The segment at 1099 to 1159 (DCDAPRCMAC…VCRDCYIHEV (61 aa)) adopts an FYVE-type zinc-finger fold. 8 residues coordinate Zn(2+): Cys-1105, Cys-1108, Cys-1121, Cys-1124, Cys-1129, Cys-1132, Cys-1151, and Cys-1154.

It belongs to the lst-2 family.

In terms of biological role, negative regulator of epidermal growth factor receptor (EGFR) signaling. The sequence is that of Lateral signaling target protein 2 homolog from Anopheles gambiae (African malaria mosquito).